The following is a 419-amino-acid chain: MNLTELKQKPITDLLQLAEEMGIENMARSRKQDVIFSLLKKHAKSGEEISGDGVLEILQDGFGFLRSADASYLAGPDDIYVSPSQIRRFNLRTGDTIVGKIRPPKEGERYFALLKVDTINFDRPENAKNKILFENLTPLFPTVRMKMEAGNGSTEDLTGRVIDLCAPIGKGQRGLIVAPPKAGKTIMLQNIAANIARNNPEVHLIVLLIDERPEEVTEMQRTVRGEVVASTFDEPPTRHVQVAEMVIEKAKRLVEHKKDVVILLDSITRLARAYNTVIPSSGKVLTGGVDAHALEKPKRFFGAARNIEEGGSLTIIATALVETGSKMDEVIYEEFKGTGNMELPLDRRIAEKRVFPAININRSGTRREELLTADDELQRMWILRKLLHPMDEVAAIEFLIDKLKTTKTNDEFFLSMKRK.

A Rho RNA-BD domain is found at 48–123 (EISGDGVLEI…LKVDTINFDR (76 aa)). RNA-binding stretches follow at residues 61-66 (GFGFLR), 78-80 (DIY), and 108-110 (ERY). ATP contacts are provided by residues 169–174 (GKGQRG), 181–186 (KAGKTI), and arginine 212. Residues 284-288 (VLTGG) are RNA-binding 2.

This sequence belongs to the Rho family. Homohexamer. The homohexamer assembles into an open ring structure.

In terms of biological role, facilitates transcription termination by a mechanism that involves Rho binding to the nascent RNA, activation of Rho's RNA-dependent ATPase activity, and release of the mRNA from the DNA template. This is Transcription termination factor Rho from Pseudomonas fluorescens biotype C.